Reading from the N-terminus, the 328-residue chain is Tetraacyldisaccharide 4'-kinase (328 aa).

59-66 (TAGGNGKT) lines the ATP pocket.

The protein belongs to the LpxK family.

It catalyses the reaction a lipid A disaccharide + ATP = a lipid IVA + ADP + H(+). Its pathway is glycolipid biosynthesis; lipid IV(A) biosynthesis; lipid IV(A) from (3R)-3-hydroxytetradecanoyl-[acyl-carrier-protein] and UDP-N-acetyl-alpha-D-glucosamine: step 6/6. Transfers the gamma-phosphate of ATP to the 4'-position of a tetraacyldisaccharide 1-phosphate intermediate (termed DS-1-P) to form tetraacyldisaccharide 1,4'-bis-phosphate (lipid IVA). This is Tetraacyldisaccharide 4'-kinase from Aliivibrio fischeri (strain ATCC 700601 / ES114) (Vibrio fischeri).